A 127-amino-acid polypeptide reads, in one-letter code: Holo-[acyl-carrier-protein] synthase (127 aa).

Residues Asp8 and Glu57 each coordinate Mg(2+).

Belongs to the P-Pant transferase superfamily. AcpS family. Mg(2+) is required as a cofactor.

The protein resides in the cytoplasm. It carries out the reaction apo-[ACP] + CoA = holo-[ACP] + adenosine 3',5'-bisphosphate + H(+). Transfers the 4'-phosphopantetheine moiety from coenzyme A to a Ser of acyl-carrier-protein. The chain is Holo-[acyl-carrier-protein] synthase from Hydrogenovibrio crunogenus (strain DSM 25203 / XCL-2) (Thiomicrospira crunogena).